Reading from the N-terminus, the 212-residue chain is ATP-dependent dethiobiotin synthetase BioD (212 aa).

13-18 lines the ATP pocket; the sequence is GIGKTV. Thr-17 lines the Mg(2+) pocket. Residue Lys-33 is part of the active site. Ser-37 is a substrate binding site. Position 100 (Glu-100) interacts with Mg(2+). ATP is bound by residues 100–103 and 184–186; these read EGAG and PRL.

Belongs to the dethiobiotin synthetase family. As to quaternary structure, homodimer. The cofactor is Mg(2+).

The protein resides in the cytoplasm. The catalysed reaction is (7R,8S)-7,8-diammoniononanoate + CO2 + ATP = (4R,5S)-dethiobiotin + ADP + phosphate + 3 H(+). It functions in the pathway cofactor biosynthesis; biotin biosynthesis; biotin from 7,8-diaminononanoate: step 1/2. In terms of biological role, catalyzes a mechanistically unusual reaction, the ATP-dependent insertion of CO2 between the N7 and N8 nitrogen atoms of 7,8-diaminopelargonic acid (DAPA, also called 7,8-diammoniononanoate) to form a ureido ring. This chain is ATP-dependent dethiobiotin synthetase BioD, found in Rhodopseudomonas palustris (strain ATCC BAA-98 / CGA009).